A 415-amino-acid chain; its full sequence is Histidine--tRNA ligase (415 aa).

This sequence belongs to the class-II aminoacyl-tRNA synthetase family. In terms of assembly, homodimer.

It is found in the cytoplasm. It carries out the reaction tRNA(His) + L-histidine + ATP = L-histidyl-tRNA(His) + AMP + diphosphate + H(+). This is Histidine--tRNA ligase from Gluconacetobacter diazotrophicus (strain ATCC 49037 / DSM 5601 / CCUG 37298 / CIP 103539 / LMG 7603 / PAl5).